The following is a 227-amino-acid chain: Glutathione S-transferase U17 (227 aa).

The GST N-terminal domain occupies 4-83; it reads SDVKLIGAWA…YIDDTWSSSG (80 aa). Glutathione-binding positions include 14–15, 40–41, 54–55, and 67–68; these read SP, SK, KI, and ES. In terms of domain architecture, GST C-terminal spans 90–222; sequence DPYDRAMARF…KLAEFAKKIF (133 aa).

The protein belongs to the GST superfamily. Tau family.

It localises to the cytoplasm. The protein localises to the cytosol. The enzyme catalyses RX + glutathione = an S-substituted glutathione + a halide anion + H(+). Its function is as follows. Involved in light signaling, mainly phyA-mediated photomorphogenesis and in the integration of various phytohormone signals to modulate various aspects of plant development by affecting glutathione pools. In vitro, possesses glutathione S-transferase activity toward 1-chloro-2,4-dinitrobenzene (CDNB) and benzyl isothiocyanate (BITC). The sequence is that of Glutathione S-transferase U17 (GSTU17) from Arabidopsis thaliana (Mouse-ear cress).